The primary structure comprises 346 residues: Heterogeneous nuclear ribonucleoprotein A2 homolog 1 (346 aa).

RRM domains are found at residues 9 to 92 (RKLF…ESAK) and 100 to 179 (KKLF…LSKQ). Disordered stretches follow at residues 182-217 (QDVQ…FRGG) and 326-346 (NYGP…RNRY). The span at 193–217 (GNFGFGDSRGGGNFGSGPGGNFRGG) shows a compositional bias: gly residues. Residues 297 to 340 (QQSSNYGPMKSGGNFGGNRSMGGGPYGGGNYGPGNASGGNGGGY) form a nuclear targeting sequence region.

It is found in the nucleus. Its function is as follows. Forms complexes (ribonucleosomes) with at least 20 other different hnRNP and heterogeneous nuclear RNA in the nucleus. The chain is Heterogeneous nuclear ribonucleoprotein A2 homolog 1 from Xenopus laevis (African clawed frog).